The chain runs to 1010 residues: MSEHPLTLQSMIATILRFWSEQGCVIHQGYDLEVGAGTFNPATFLRALGPEPYKAAYVEPSRRPQDGRYGVHPNRLQNYHQLQVILKPVPENFLSLYTESLRAIGLDLRDHDIRFIHDDWENPTIGAWGLGWEVWLNGMEITQLTYFQAIGSKPLDTISGEITYGIERIAMYLQKKTSIYDVLWNDTLTYGQITQASEKAWSEYNFDYANTEMWFKHFEDFAEEALRTLKNGLSVPAYDFVIKASHAFNILDARGTISVTERTRYIARIRQLTRLVADSYVEWRASLNYPLLSLSSTSEPKETSESVVPMISSTEDLLLEIGSEELPATFVPIGIQQLESLARQVLTDHNIVYEGLEVLGSPRRLALLVKNVAPEVVQKAFEKKGPMLTSLFSPDGDVSPQGQQFFASQGVDISHYQDLSRHASLAIRTVNGSEYLFLLHPEIRLRTADILMQELPLLIQRMKFPKKMVWDNSGVEYARPIRWLVALYGEHILPITLGTIIASRNSFGHRQLDPRKISISSPQDYVETLRQACVVVSQKERRMIIEQGLRAHSSDTISAIPLPRLIEEATFLSEHPFVSCGQFSEQFCALPKELLIAEMVNHQKYFPTHETSSGAISNFFIVVCDNSPNDTIIEGNEKALTPRLTDGEFLFKQDLQTPLTTFIEKLKSVTYFEALGSLYDKVERLKAHQRVFSTFSSLAASEDLDIAIQYCKADLVSAVVNEFPELQGIMGEYYLKHANLPTASAVAVGEHLRHITMGQKLSTIGTLLSLLDRLDNLLACFILGLKPTSSHDPYALRRQSLEVLTLVSASRLPIDLASLLDRLADHFPSTIEEKVWDKSKTIHEILEFIWGRLKTFMGSLEFRKDEIAAVLIDSATKNPIEILDTAEALQLLKEEHTEKLAVITTTHNRLKKILSSLKLSMTSSPIEVLGDRESNFKQVLDAFPGFPKETSAHAFLEYFLSLADLSNDIQDFLNTVHIANDDGAIRNLRISLLLTAMDKFSLCHWESVAV.

Positions Met-1–Ser-312 are glycine--tRNA ligase alpha subunit. Residues Ser-313 to Val-1010 are glycine--tRNA ligase beta subunit.

This sequence belongs to the class-II aminoacyl-tRNA synthetase family.

Its subcellular location is the cytoplasm. It carries out the reaction tRNA(Gly) + glycine + ATP = glycyl-tRNA(Gly) + AMP + diphosphate. This is Glycine--tRNA ligase (glyQS) from Chlamydia pneumoniae (Chlamydophila pneumoniae).